Here is a 499-residue protein sequence, read N- to C-terminus: Cytochrome P450 710A2 (499 aa).

A helical transmembrane segment spans residues 5-25 (VSIFASLAPYLVSALLLFFLI). C439 is a heme binding site.

This sequence belongs to the cytochrome P450 family. The cofactor is heme. In terms of tissue distribution, expressed in the vascular tissues of roots, shoots, stems and leaves. Expressed in root tips, carpes, siliques and seeds.

The protein localises to the membrane. The catalysed reaction is 5-dehydroepisterol + NADPH + O2 + H(+) = ergosta-5,7,22,24(28)-tetraen-3beta-ol + NADP(+) + 2 H2O. The protein operates within steroid biosynthesis; sterol biosynthesis. Required to form the C-22 double bond in the sterol side chain. Possesses in vitro C-22 desaturase activity toward 24-epi-campesterol and beta-sitosterol and produces brassicasterol and stigmasterol, respectively. No activity with campesterol. This Arabidopsis thaliana (Mouse-ear cress) protein is Cytochrome P450 710A2.